The following is a 176-amino-acid chain: NAD(P)H-quinone oxidoreductase subunit 6, chloroplastic (176 aa).

The next 5 helical transmembrane spans lie at 10-30 (FLLVFLGSGLLVGGLGVVLLP), 32-52 (PIFSAFSLGFVLVCISLLYIL), 61-81 (AQLLIYVGAINVLIIFAVMFM), 92-112 (LWTVGNGITSLVCTTILFLLM), and 152-172 (FFLPFELISIILLVALIGAIS).

It belongs to the complex I subunit 6 family. As to quaternary structure, NDH is composed of at least 16 different subunits, 5 of which are encoded in the nucleus.

Its subcellular location is the plastid. It is found in the chloroplast thylakoid membrane. The catalysed reaction is a plastoquinone + NADH + (n+1) H(+)(in) = a plastoquinol + NAD(+) + n H(+)(out). It carries out the reaction a plastoquinone + NADPH + (n+1) H(+)(in) = a plastoquinol + NADP(+) + n H(+)(out). NDH shuttles electrons from NAD(P)H:plastoquinone, via FMN and iron-sulfur (Fe-S) centers, to quinones in the photosynthetic chain and possibly in a chloroplast respiratory chain. The immediate electron acceptor for the enzyme in this species is believed to be plastoquinone. Couples the redox reaction to proton translocation, and thus conserves the redox energy in a proton gradient. The polypeptide is NAD(P)H-quinone oxidoreductase subunit 6, chloroplastic (ndhG) (Capsella bursa-pastoris (Shepherd's purse)).